The following is a 470-amino-acid chain: Probable citrate synthase, mitochondrial (470 aa).

Residues H297, H351, and D406 contribute to the active site.

The protein belongs to the citrate synthase family. As to quaternary structure, homodimer.

Its subcellular location is the mitochondrion matrix. The catalysed reaction is oxaloacetate + acetyl-CoA + H2O = citrate + CoA + H(+). It functions in the pathway carbohydrate metabolism; tricarboxylic acid cycle; isocitrate from oxaloacetate: step 1/2. The polypeptide is Probable citrate synthase, mitochondrial (Leishmania infantum).